The following is a 546-amino-acid chain: MKKFLKYLLVLIILILIAGIVFLFRPIASKQVQTAKDEPVVDAVLVGGGIMSATLGTYFTELEPNWQIRMYERLDQVAQESSNGFNNAGTGHSGFMEMNYTEEKNGKMEIAKAEKVASQFEVAKQFWSYQVKQGVLAEPKTFINPVPHIAFVWGDNVKFLEKRYAAMIQSPLFKGMKFTEDPAVIKQWAPLVMTDRDPTQKVAATRMEVGSDVNYGSITKQLVNHLNQNPNFKLQTSTEVTGISQNDDKTWTVSFKNLKTGKTDHVKTRFVFIGAGGAAVKLLQLTGLPEAKQYAGFPVGGEFLITDNPAITAQHTAKVYGRAELGAPPMSVPHIDTRYIDGKKYVLFGPFATYSNKFLKNGSQLDLLASTNKSNVLPMTTVGLENLDLVKYLVSQVMMSDEDRLNELRKYYPDAKAEDWRLSQGGQRVQIIKKEPGKPATLQFGTEIFASKDGAVTALLGASPGASTSPYIMLNLLEKAFPQQTEGKWNQKLHEIVVSYKQDLSKDPVLLDKVRQYTSSTLGLNYTSPFKAANDETAAAPVAKAN.

It belongs to the MQO family. FAD serves as cofactor.

The catalysed reaction is (S)-malate + a quinone = a quinol + oxaloacetate. Its pathway is carbohydrate metabolism; tricarboxylic acid cycle; oxaloacetate from (S)-malate (quinone route): step 1/1. The sequence is that of Probable malate:quinone oxidoreductase from Acinetobacter baumannii (strain AB0057).